We begin with the raw amino-acid sequence, 401 residues long: Glycerol-1-phosphate dehydrogenase [NAD(P)+] (401 aa).

NAD(+) is bound by residues Asp-57, Gly-118–Asp-122, and Thr-140–Ser-143. Asp-145 contacts substrate. Residue Ser-149 coordinates NAD(+). Asp-192 is a binding site for substrate. Positions 192 and 272 each coordinate Ni(2+). Residue His-276 participates in substrate binding. His-292 is a Ni(2+) binding site.

It belongs to the glycerol-1-phosphate dehydrogenase family. In terms of assembly, homodimer. Requires Ni(2+) as cofactor.

It is found in the cytoplasm. It catalyses the reaction sn-glycerol 1-phosphate + NAD(+) = dihydroxyacetone phosphate + NADH + H(+). It carries out the reaction sn-glycerol 1-phosphate + NADP(+) = dihydroxyacetone phosphate + NADPH + H(+). Functionally, catalyzes the NAD(P)H-dependent reduction of dihydroxyacetonephosphate (DHAP or glycerone phosphate) to glycerol 1-phosphate (G1P). The G1P thus generated is probably used for the synthesis of phosphoglycerolipids in Gram-positive bacterial species. This chain is Glycerol-1-phosphate dehydrogenase [NAD(P)+], found in Bacillus licheniformis (strain ATCC 14580 / DSM 13 / JCM 2505 / CCUG 7422 / NBRC 12200 / NCIMB 9375 / NCTC 10341 / NRRL NRS-1264 / Gibson 46).